We begin with the raw amino-acid sequence, 340 residues long: Ketol-acid reductoisomerase (NADP(+)) (340 aa).

The region spanning 2-181 (AKVFYNGDIN…GSARAGVIET (180 aa)) is the KARI N-terminal Rossmann domain. NADP(+) is bound by residues 25 to 28 (YGSQ), Arg-48, Ser-52, and 82 to 85 (DEHQ). The active site involves His-107. Gly-133 is an NADP(+) binding site. Residues 182 to 327 (TFQEETETDL…RELREMMPFV (146 aa)) enclose the KARI C-terminal knotted domain. Residues Asp-190, Glu-194, Glu-226, and Glu-230 each contribute to the Mg(2+) site. Residue Ser-251 participates in substrate binding.

Belongs to the ketol-acid reductoisomerase family. Requires Mg(2+) as cofactor.

The enzyme catalyses (2R)-2,3-dihydroxy-3-methylbutanoate + NADP(+) = (2S)-2-acetolactate + NADPH + H(+). The catalysed reaction is (2R,3R)-2,3-dihydroxy-3-methylpentanoate + NADP(+) = (S)-2-ethyl-2-hydroxy-3-oxobutanoate + NADPH + H(+). Its pathway is amino-acid biosynthesis; L-isoleucine biosynthesis; L-isoleucine from 2-oxobutanoate: step 2/4. It functions in the pathway amino-acid biosynthesis; L-valine biosynthesis; L-valine from pyruvate: step 2/4. Functionally, involved in the biosynthesis of branched-chain amino acids (BCAA). Catalyzes an alkyl-migration followed by a ketol-acid reduction of (S)-2-acetolactate (S2AL) to yield (R)-2,3-dihydroxy-isovalerate. In the isomerase reaction, S2AL is rearranged via a Mg-dependent methyl migration to produce 3-hydroxy-3-methyl-2-ketobutyrate (HMKB). In the reductase reaction, this 2-ketoacid undergoes a metal-dependent reduction by NADPH to yield (R)-2,3-dihydroxy-isovalerate. The polypeptide is Ketol-acid reductoisomerase (NADP(+)) (Halalkalibacterium halodurans (strain ATCC BAA-125 / DSM 18197 / FERM 7344 / JCM 9153 / C-125) (Bacillus halodurans)).